A 453-amino-acid chain; its full sequence is Bifunctional protein GlmU (453 aa).

The pyrophosphorylase stretch occupies residues 1 to 226 (MKFSAVILAA…PIEVEGVNDR (226 aa)). UDP-N-acetyl-alpha-D-glucosamine contacts are provided by residues 8–11 (LAAG), K22, Q73, 78–79 (GT), 100–102 (YGD), G137, E151, N166, and N224. D102 is a binding site for Mg(2+). N224 serves as a coordination point for Mg(2+). The segment at 227-247 (AQLARLERAFQAAQAKKLLEQ) is linker. The interval 248–453 (GVMLRDPARF…TGWQRPVKKK (206 aa)) is N-acetyltransferase. Residues R330 and K348 each contribute to the UDP-N-acetyl-alpha-D-glucosamine site. H360 acts as the Proton acceptor in catalysis. Residues Y363 and N374 each contribute to the UDP-N-acetyl-alpha-D-glucosamine site. Acetyl-CoA-binding positions include A377, 383–384 (NY), S402, A420, and R437.

The protein in the N-terminal section; belongs to the N-acetylglucosamine-1-phosphate uridyltransferase family. This sequence in the C-terminal section; belongs to the transferase hexapeptide repeat family. Homotrimer. Mg(2+) is required as a cofactor.

It is found in the cytoplasm. The catalysed reaction is alpha-D-glucosamine 1-phosphate + acetyl-CoA = N-acetyl-alpha-D-glucosamine 1-phosphate + CoA + H(+). It carries out the reaction N-acetyl-alpha-D-glucosamine 1-phosphate + UTP + H(+) = UDP-N-acetyl-alpha-D-glucosamine + diphosphate. Its pathway is nucleotide-sugar biosynthesis; UDP-N-acetyl-alpha-D-glucosamine biosynthesis; N-acetyl-alpha-D-glucosamine 1-phosphate from alpha-D-glucosamine 6-phosphate (route II): step 2/2. It participates in nucleotide-sugar biosynthesis; UDP-N-acetyl-alpha-D-glucosamine biosynthesis; UDP-N-acetyl-alpha-D-glucosamine from N-acetyl-alpha-D-glucosamine 1-phosphate: step 1/1. It functions in the pathway bacterial outer membrane biogenesis; LPS lipid A biosynthesis. In terms of biological role, catalyzes the last two sequential reactions in the de novo biosynthetic pathway for UDP-N-acetylglucosamine (UDP-GlcNAc). The C-terminal domain catalyzes the transfer of acetyl group from acetyl coenzyme A to glucosamine-1-phosphate (GlcN-1-P) to produce N-acetylglucosamine-1-phosphate (GlcNAc-1-P), which is converted into UDP-GlcNAc by the transfer of uridine 5-monophosphate (from uridine 5-triphosphate), a reaction catalyzed by the N-terminal domain. The sequence is that of Bifunctional protein GlmU from Vibrio vulnificus (strain YJ016).